Here is a 170-residue protein sequence, read N- to C-terminus: Protein ripply3 (170 aa).

Residues 40–43 carry the WRPW motif motif; it reads WRPW. The interval 79–114 is ripply homology domain; it reads HPVRLYMPKSKTSEYLQHMGKKVLANFPVQATIHFY. Over residues 143–152 the composition is skewed to polar residues; sequence VNSSRGSGDN. The disordered stretch occupies residues 143 to 170; that stretch reads VNSSRGSGDNYSVPGGPKRNISSHTGSA.

This sequence belongs to the ripply family. Interacts with tbx1 and tle4/grg4.

It is found in the nucleus. Its function is as follows. Acts as a transcriptional corepressor. Negative regulator of the transcriptional activity of tbx1 that plays a key role in pharyngeal development. Plays a role in the formation of the anteroposterior (AP) axis during embryonic development; required to establish the posterolateral border of the pre-placodal ectoderm (PPE) acting downstream of the retinoic acid receptor (RAR) signaling. The sequence is that of Protein ripply3 from Xenopus tropicalis (Western clawed frog).